We begin with the raw amino-acid sequence, 272 residues long: NH(3)-dependent NAD(+) synthetase (272 aa).

Position 45–52 (45–52 (GISGGQDS)) interacts with ATP. Mg(2+) is bound at residue aspartate 51. Arginine 138 contacts deamido-NAD(+). Threonine 158 lines the ATP pocket. Residue glutamate 163 coordinates Mg(2+). 2 residues coordinate deamido-NAD(+): lysine 171 and aspartate 178. Residues lysine 187 and threonine 209 each coordinate ATP. 258–259 (HK) contacts deamido-NAD(+).

It belongs to the NAD synthetase family. As to quaternary structure, homodimer.

The catalysed reaction is deamido-NAD(+) + NH4(+) + ATP = AMP + diphosphate + NAD(+) + H(+). The protein operates within cofactor biosynthesis; NAD(+) biosynthesis; NAD(+) from deamido-NAD(+) (ammonia route): step 1/1. Its function is as follows. Catalyzes the ATP-dependent amidation of deamido-NAD to form NAD. Uses ammonia as a nitrogen source. In Bacillus thuringiensis subsp. konkukian (strain 97-27), this protein is NH(3)-dependent NAD(+) synthetase.